The following is a 1488-amino-acid chain: Chromosome partition protein MukB (1488 aa).

34–41 lines the ATP pocket; sequence GGNGAGKS. Coiled-coil stretches lie at residues 326–418, 444–472, and 509–602; these read LEAD…QYNQ, LDTF…QTAH, and RHLA…QRAP. Residues 666 to 783 are flexible hinge; sequence PGGAEDQRLN…SLPIFGRAAR (118 aa). Coiled-coil stretches lie at residues 835-923, 977-1116, and 1209-1265; these read EAEI…AKLE, EMLS…AKAG, and VEAI…LQSV. The disordered stretch occupies residues 1049 to 1074; sequence ADSGAEERARQRRDELHAQLSNNRSR. Over residues 1051-1065 the composition is skewed to basic and acidic residues; sequence SGAEERARQRRDELH.

The protein belongs to the SMC family. MukB subfamily. Homodimerization via its hinge domain. Binds to DNA via its C-terminal region. Interacts, and probably forms a ternary complex, with MukE and MukF via its C-terminal region. The complex formation is stimulated by calcium or magnesium. Interacts with tubulin-related protein FtsZ.

It localises to the cytoplasm. It is found in the nucleoid. In terms of biological role, plays a central role in chromosome condensation, segregation and cell cycle progression. Functions as a homodimer, which is essential for chromosome partition. Involved in negative DNA supercoiling in vivo, and by this means organize and compact chromosomes. May achieve or facilitate chromosome segregation by condensation DNA from both sides of a centrally located replisome during cell division. The chain is Chromosome partition protein MukB from Salmonella schwarzengrund (strain CVM19633).